The chain runs to 90 residues: Putative regulatory protein NT01CX_2250 (90 aa).

It belongs to the RemA family.

This chain is Putative regulatory protein NT01CX_2250, found in Clostridium novyi (strain NT).